Here is a 288-residue protein sequence, read N- to C-terminus: Pantothenate synthetase (288 aa).

30–37 (MGALHEGH) lines the ATP pocket. Residue His37 is the Proton donor of the active site. Gln61 is a binding site for (R)-pantoate. Gln61 provides a ligand contact to beta-alanine. 147–150 (GEKD) lines the ATP pocket. Gln153 is a (R)-pantoate binding site. ATP is bound by residues Val176 and 184 to 187 (ISSR).

The protein belongs to the pantothenate synthetase family. As to quaternary structure, homodimer.

The protein localises to the cytoplasm. It carries out the reaction (R)-pantoate + beta-alanine + ATP = (R)-pantothenate + AMP + diphosphate + H(+). Its pathway is cofactor biosynthesis; (R)-pantothenate biosynthesis; (R)-pantothenate from (R)-pantoate and beta-alanine: step 1/1. Catalyzes the condensation of pantoate with beta-alanine in an ATP-dependent reaction via a pantoyl-adenylate intermediate. This is Pantothenate synthetase from Chlorobium phaeobacteroides (strain BS1).